Consider the following 520-residue polypeptide: DEP domain-containing protein 7 (520 aa).

The DEP domain maps to 45–137 (ALTQVEVKKR…SSCSLYRFIN (93 aa)). Residues 148–167 (KSNGRCTPQRPKHSSFQSAP) are disordered.

The protein belongs to the DEPDC7 family.

The sequence is that of DEP domain-containing protein 7 (depdc7) from Xenopus tropicalis (Western clawed frog).